Consider the following 299-residue polypeptide: MAEEQAYHVSKGLECIKALRENPPNMEEIQEVSNIRDQTYKSSKESGTTGVQEEEITQNIDESHTPTKRSNSVSDVLQEDQRGREDNTAPVEAKDRIEEDTQTGPAVRRYYVYDHCGEKVKGIEDADSLMVPAGPPSNRGFEGREGSLDDSIEDSSEDYSEGNASSNWGYTFGLNPDRAADVSMLMEEELTALLGTGHNAGGQKRDGRTLQFPNSPEGSIGNQACEPIKKGHRREVSLTWNDDRCWIDKWCNPICTQVNWGVIRAKCICGECPPVCDDCKDDPEMQNRIWYETPTRETK.

2 disordered regions span residues 30–101 (QEVS…EEDT) and 128–163 (SLMVPAGPPSNRGFEGREGSLDDSIEDSSEDYSEGN). The segment covering 79–99 (EDQRGREDNTAPVEAKDRIEE) has biased composition (basic and acidic residues). Acidic residues predominate over residues 148–160 (LDDSIEDSSEDYS). Positions 232, 251, 255, 267, 269, 272, 276, and 279 each coordinate Zn(2+).

Blocks host interferon signaling. This is Non-structural protein V (P/V) from Phocidae (true seals).